The chain runs to 402 residues: S-adenosylmethionine synthase (402 aa).

137–142 provides a ligand contact to ATP; it reads GQGSAD.

It belongs to the AdoMet synthase 2 family. Requires Mg(2+) as cofactor.

It carries out the reaction L-methionine + ATP + H2O = S-adenosyl-L-methionine + phosphate + diphosphate. It functions in the pathway amino-acid biosynthesis; S-adenosyl-L-methionine biosynthesis; S-adenosyl-L-methionine from L-methionine: step 1/1. In terms of biological role, catalyzes the formation of S-adenosylmethionine from methionine and ATP. This chain is S-adenosylmethionine synthase, found in Pyrobaculum aerophilum (strain ATCC 51768 / DSM 7523 / JCM 9630 / CIP 104966 / NBRC 100827 / IM2).